The following is a 121-amino-acid chain: Large ribosomal subunit protein bL12 (121 aa).

Belongs to the bacterial ribosomal protein bL12 family. In terms of assembly, homodimer. Part of the ribosomal stalk of the 50S ribosomal subunit. Forms a multimeric L10(L12)X complex, where L10 forms an elongated spine to which 2 to 4 L12 dimers bind in a sequential fashion. Binds GTP-bound translation factors.

Its function is as follows. Forms part of the ribosomal stalk which helps the ribosome interact with GTP-bound translation factors. Is thus essential for accurate translation. The polypeptide is Large ribosomal subunit protein bL12 (Proteus mirabilis (strain HI4320)).